The sequence spans 145 residues: Large ribosomal subunit protein uL16 (145 aa).

This sequence belongs to the universal ribosomal protein uL16 family. As to quaternary structure, part of the 50S ribosomal subunit.

Binds 23S rRNA and is also seen to make contacts with the A and possibly P site tRNAs. The chain is Large ribosomal subunit protein uL16 from Shouchella clausii (strain KSM-K16) (Alkalihalobacillus clausii).